Reading from the N-terminus, the 339-residue chain is Phenylalanine--tRNA ligase alpha subunit (339 aa).

Glutamate 250 contacts Mg(2+).

It belongs to the class-II aminoacyl-tRNA synthetase family. Phe-tRNA synthetase alpha subunit type 1 subfamily. Tetramer of two alpha and two beta subunits. Requires Mg(2+) as cofactor.

It localises to the cytoplasm. The enzyme catalyses tRNA(Phe) + L-phenylalanine + ATP = L-phenylalanyl-tRNA(Phe) + AMP + diphosphate + H(+). The chain is Phenylalanine--tRNA ligase alpha subunit from Flavobacterium psychrophilum (strain ATCC 49511 / DSM 21280 / CIP 103535 / JIP02/86).